We begin with the raw amino-acid sequence, 1171 residues long: ATP-dependent helicase/deoxyribonuclease subunit B (1171 aa).

The region spanning 1-390 (MSLRFVIGRA…HPLVECIRSA (390 aa)) is the UvrD-like helicase ATP-binding domain. 8-15 (GRAGSGKS) serves as a coordination point for ATP. A UvrD-like helicase C-terminal domain is found at 281 to 587 (MEQPRFHSPA…QFANIPPSLD (307 aa)). [4Fe-4S] cluster-binding residues include Cys805, Cys1129, Cys1132, and Cys1138.

This sequence belongs to the helicase family. AddB/RexB type 1 subfamily. Heterodimer of AddA and AddB. Mg(2+) serves as cofactor. [4Fe-4S] cluster is required as a cofactor.

Functionally, the heterodimer acts as both an ATP-dependent DNA helicase and an ATP-dependent, dual-direction single-stranded exonuclease. Recognizes the chi site generating a DNA molecule suitable for the initiation of homologous recombination. The AddB subunit has 5' -&gt; 3' nuclease activity but not helicase activity. This Bacillus cereus (strain ZK / E33L) protein is ATP-dependent helicase/deoxyribonuclease subunit B.